Here is a 541-residue protein sequence, read N- to C-terminus: Chaperonin GroEL 2 (541 aa).

Residues 29 to 32 (TLGP), 86 to 90 (DGTTT), Gly-413, and Asp-492 contribute to the ATP site.

Belongs to the chaperonin (HSP60) family. In terms of assembly, forms a cylinder of 14 subunits composed of two heptameric rings stacked back-to-back. Interacts with the co-chaperonin GroES.

It localises to the cytoplasm. The enzyme catalyses ATP + H2O + a folded polypeptide = ADP + phosphate + an unfolded polypeptide.. Together with its co-chaperonin GroES, plays an essential role in assisting protein folding. The GroEL-GroES system forms a nano-cage that allows encapsulation of the non-native substrate proteins and provides a physical environment optimized to promote and accelerate protein folding. The polypeptide is Chaperonin GroEL 2 (Acidothermus cellulolyticus (strain ATCC 43068 / DSM 8971 / 11B)).